The following is a 416-amino-acid chain: Neamine transaminase NeoN (416 aa).

Lysine 231 carries the N6-(pyridoxal phosphate)lysine modification.

This sequence belongs to the class-III pyridoxal-phosphate-dependent aminotransferase family. Requires pyridoxal 5'-phosphate as cofactor.

It catalyses the reaction neomycin C + 2-oxoglutarate = 6'''-deamino-6'''-oxoneomycin C + L-glutamate. The catalysed reaction is neamine + 2-oxoglutarate = 6'-oxoparomamine + L-glutamate. The protein operates within antibiotic biosynthesis; neomycin biosynthesis. 6'-oxoglucosaminyl:L-glutamate aminotransferase that catalyzes pyridoxal-5'-phosphate-mediated transamination for the conversion of paromamine to neamine in the biosynthetic pathway of neomycin. Also able to catalyze deamination at C-6''' of neomycin. This is Neamine transaminase NeoN (neoN) from Streptomyces fradiae (Streptomyces roseoflavus).